A 92-amino-acid chain; its full sequence is RNA-binding protein Hfq (92 aa).

The Sm domain maps to 9–68 (DPFLNALRRERVPVSVYLVNGIKLQGTIESFDQFVVLLRNTVSQMVYKHAISTVVPARNV). The disordered stretch occupies residues 72–92 (PGGGYVQSNENNQAEDDDVEQ).

Belongs to the Hfq family. In terms of assembly, homohexamer.

RNA chaperone that binds small regulatory RNA (sRNAs) and mRNAs to facilitate mRNA translational regulation in response to envelope stress, environmental stress and changes in metabolite concentrations. Also binds with high specificity to tRNAs. The protein is RNA-binding protein Hfq of Xanthomonas campestris pv. campestris (strain 8004).